Consider the following 187-residue polypeptide: UPF0301 protein YPTS_3341 (187 aa).

This sequence belongs to the UPF0301 (AlgH) family.

This is UPF0301 protein YPTS_3341 from Yersinia pseudotuberculosis serotype IB (strain PB1/+).